We begin with the raw amino-acid sequence, 502 residues long: Alpha-ketoglutarate-dependent dioxygenase FTO (502 aa).

Residues 32–324 form a fe2OG dioxygenase domain region; that stretch reads TPKDDEFYQQ…SSTHRVAECS (293 aa). Substrate contacts are provided by Arg96 and Tyr108. Asn202 provides a ligand contact to 2-oxoglutarate. The interval 210–221 is loop L1; predicted to block binding of double-stranded DNA or RNA; sequence PYLKEEPYFGMG. Lys213 carries the N6-acetyllysine modification. 2 residues coordinate Fe cation: His228 and Asp230. 228-231 is a substrate binding site; it reads HHDE. A 2-oxoglutarate-binding site is contributed by Tyr292. Residue His304 participates in Fe cation binding. Residues 313–315, Thr317, and Arg319 each bind 2-oxoglutarate; that span reads RFS.

Belongs to the fto family. In terms of assembly, monomer. May also exist as homodimer. Fe(2+) serves as cofactor. In terms of tissue distribution, ubiquitous. Highly expressed in teeth and weakly in bone.

It is found in the nucleus. Its subcellular location is the nucleus speckle. The protein resides in the cytoplasm. The catalysed reaction is a 5'-end (N(7)-methyl 5'-triphosphoguanosine)-(N(6),2'-O-dimethyladenosine) in mRNA + 2-oxoglutarate + O2 = a 5'-end (N(7)-methyl 5'-triphosphoguanosine)-(2'-O-methyladenosine) in mRNA + formaldehyde + succinate + CO2. It carries out the reaction an N(6)-methyladenosine in mRNA + 2-oxoglutarate + O2 = an adenosine in mRNA + formaldehyde + succinate + CO2. The enzyme catalyses N(6)-methyladenosine in U6 snRNA + 2-oxoglutarate + O2 = adenosine in U6 snRNA + formaldehyde + succinate + CO2. It catalyses the reaction a 5'-end (N(7)-methyl 5'-triphosphoguanosine)-(N(6),2'-O-dimethyladenosine) in U6 snRNA + 2-oxoglutarate + O2 = a 5'-end (N(7)-methyl 5'-triphosphoguanosine)-(2'-O-methyladenosine) in U6 snRNA + formaldehyde + succinate + CO2. The catalysed reaction is an N(1)-methyladenosine in tRNA + 2-oxoglutarate + O2 = an adenosine in tRNA + formaldehyde + succinate + CO2. With respect to regulation, activated by ascorbate. Inhibited by N-oxalylglycine, fumarate and succinate. Functionally, RNA demethylase that mediates oxidative demethylation of different RNA species, such as mRNAs, tRNAs and snRNAs, and acts as a regulator of fat mass, adipogenesis and energy homeostasis. Specifically demethylates N(6)-methyladenosine (m6A) RNA, the most prevalent internal modification of messenger RNA (mRNA) in higher eukaryotes. M6A demethylation by FTO affects mRNA expression and stability. Also able to demethylate m6A in U6 small nuclear RNA (snRNA). Mediates demethylation of N(6),2'-O-dimethyladenosine cap (m6A(m)), by demethylating the N(6)-methyladenosine at the second transcribed position of mRNAs and U6 snRNA. Demethylation of m6A(m) in the 5'-cap by FTO affects mRNA stability by promoting susceptibility to decapping. Also acts as a tRNA demethylase by removing N(1)-methyladenine from various tRNAs. Has no activity towards 1-methylguanine. Has no detectable activity towards double-stranded DNA. Also able to repair alkylated DNA and RNA by oxidative demethylation: demethylates single-stranded RNA containing 3-methyluracil, single-stranded DNA containing 3-methylthymine and has low demethylase activity towards single-stranded DNA containing 1-methyladenine or 3-methylcytosine. Ability to repair alkylated DNA and RNA is however unsure in vivo. Involved in the regulation of fat mass, adipogenesis and body weight, thereby contributing to the regulation of body size and body fat accumulation. Involved in the regulation of thermogenesis and the control of adipocyte differentiation into brown or white fat cells. Regulates activity of the dopaminergic midbrain circuitry via its ability to demethylate m6A in mRNAs. This is Alpha-ketoglutarate-dependent dioxygenase FTO from Rattus norvegicus (Rat).